Reading from the N-terminus, the 253-residue chain is Uracil-DNA glycosylase (253 aa).

Catalysis depends on D79, which acts as the Proton acceptor.

The protein belongs to the uracil-DNA glycosylase (UDG) superfamily. UNG family.

It is found in the cytoplasm. It carries out the reaction Hydrolyzes single-stranded DNA or mismatched double-stranded DNA and polynucleotides, releasing free uracil.. Excises uracil residues from the DNA which can arise as a result of misincorporation of dUMP residues by DNA polymerase or due to deamination of cytosine. This is Uracil-DNA glycosylase from Xylella fastidiosa (strain 9a5c).